The sequence spans 67 residues: Non-specific lipid-transfer protein 2 (67 aa).

4 disulfides stabilise this stretch: cysteine 3/cysteine 35, cysteine 11/cysteine 25, cysteine 26/cysteine 61, and cysteine 37/cysteine 67.

Belongs to the plant LTP family. In terms of assembly, monomer. Disulfide bonds.

Its function is as follows. Plant non-specific lipid-transfer proteins transfer phospholipids as well as galactolipids across membranes. May play a role in wax or cutin deposition in the cell walls of expanding epidermal cells and certain secretory tissues. This Apium graveolens var. rapaceum (Celeriac) protein is Non-specific lipid-transfer protein 2.